The sequence spans 417 residues: Diphosphomevalonate decarboxylase 1 (417 aa).

22–25 (YWGK) contributes to the (R)-5-diphosphomevalonate binding site. Positions 39–47 (RVSLDPDHL) match the Peroxisomal targeting signal PTS2 motif. Residues R77, 160–165 (SGSACR), and T216 contribute to the (R)-5-diphosphomevalonate site.

Belongs to the diphosphomevalonate decarboxylase family. Homodimer.

The protein localises to the peroxisome. It catalyses the reaction (R)-5-diphosphomevalonate + ATP = isopentenyl diphosphate + ADP + phosphate + CO2. Its pathway is isoprenoid biosynthesis; isopentenyl diphosphate biosynthesis via mevalonate pathway; isopentenyl diphosphate from (R)-mevalonate: step 3/3. Performs the first committed step in the biosynthesis of isoprene-containing compounds such as sterols and terpenoids. Component of the triterpene saponins (e.g. ginsenosides or panaxosides) and phytosterols biosynthetic pathways. Catalyzes the conversion of mevalonate diphosphate to isopentenyl diphosphate (IPP). This is Diphosphomevalonate decarboxylase 1 from Panax ginseng (Korean ginseng).